The chain runs to 164 residues: MGVFSSPMSTLRWVTLFAALLSLLEWGTAHEDIVMDGDQVVQQQGRSCDPQRLSACRDYLQRRREQPSERCCEELQRMSPHCRCRAIERALDQSQSYDSSTDSDSQDGAPLNQRRRRRGEGRGREEEEAVERAEELPNRCNLRESPRRCDIRRHSRYSIIGGSD.

Positions 1 to 29 are cleaved as a signal peptide; the sequence is MGVFSSPMSTLRWVTLFAALLSLLEWGTA. The segment covering 92–107 has biased composition (low complexity); the sequence is DQSQSYDSSTDSDSQD. The disordered stretch occupies residues 92 to 137; sequence DQSQSYDSSTDSDSQDGAPLNQRRRRRGEGRGREEEEAVERAEELP. Over residues 120-137 the composition is skewed to basic and acidic residues; sequence EGRGREEEEAVERAEELP. A glycan (N-linked (GalNAc...) asparagine) is linked at asparagine 138.

It belongs to the 2S seed storage albumins family.

The protein is 2S albumin seed storage protein PINP1 of Pinus pinea (Italian stone pine).